A 137-amino-acid chain; its full sequence is Ubiquitin-conjugating enzyme variant MMS2 (137 aa).

Residues 5 to 137 (PRNFRLLEEL…LRQPKEGETF (133 aa)) enclose the UBC core domain. Ser-71 carries the post-translational modification Phosphoserine.

The protein belongs to the ubiquitin-conjugating enzyme family. Heterodimer with UBC13.

In terms of biological role, has a role in the DNA error-free postreplication repair (PRR) pathway. Lacks catalytic activity by itself. The UBC13/MMS2 heterodimer catalyzes the synthesis of non-canonical poly-ubiquitin chains that are linked through 'Lys-63'. This chain is Ubiquitin-conjugating enzyme variant MMS2 (MMS2), found in Saccharomyces cerevisiae (strain ATCC 204508 / S288c) (Baker's yeast).